A 282-amino-acid chain; its full sequence is D-alanine aminotransferase (282 aa).

Residue Y32 coordinates substrate. Pyridoxal 5'-phosphate is bound at residue R51. Residues R99 and H101 each coordinate substrate. K146 serves as the catalytic Proton acceptor. K146 is subject to N6-(pyridoxal phosphate)lysine. A pyridoxal 5'-phosphate-binding site is contributed by E178.

It belongs to the class-IV pyridoxal-phosphate-dependent aminotransferase family. In terms of assembly, homodimer. Pyridoxal 5'-phosphate is required as a cofactor.

The catalysed reaction is D-alanine + 2-oxoglutarate = D-glutamate + pyruvate. In terms of biological role, acts on the D-isomers of alanine, leucine, aspartate, glutamate, aminobutyrate, norvaline and asparagine. The enzyme transfers an amino group from a substrate D-amino acid to the pyridoxal phosphate cofactor to form pyridoxamine and an alpha-keto acid in the first half-reaction. The second half-reaction is the reverse of the first, transferring the amino group from the pyridoxamine to a second alpha-keto acid to form the product D-amino acid via a ping-pong mechanism. This is an important process in the formation of D-alanine and D-glutamate, which are essential bacterial cell wall components. The protein is D-alanine aminotransferase (dat) of Staphylococcus aureus (strain N315).